We begin with the raw amino-acid sequence, 129 residues long: Holo-[acyl-carrier-protein] synthase (129 aa).

Asp8 and Glu60 together coordinate Mg(2+).

Belongs to the P-Pant transferase superfamily. AcpS family. Mg(2+) is required as a cofactor.

Its subcellular location is the cytoplasm. The enzyme catalyses apo-[ACP] + CoA = holo-[ACP] + adenosine 3',5'-bisphosphate + H(+). In terms of biological role, transfers the 4'-phosphopantetheine moiety from coenzyme A to a Ser of acyl-carrier-protein. The sequence is that of Holo-[acyl-carrier-protein] synthase from Anaeromyxobacter sp. (strain Fw109-5).